We begin with the raw amino-acid sequence, 257 residues long: MTIWEAFFLGLIQGVTEFLPISSSGHLELAQYFLGFEKLQSYVLFNLICHLGTLGSILYMFLPQIKQSLITERNHIFHIILGTLPLFPLVLILKPIKATFDQPQYLGLCFLFSAALLFSGVYFRLQMQKKHSLRDCLTIGLFQAVAVLPGISRSGATISAARLLGWDKQDAIQFSFLLAIPAILGGTFLEIWQFLKLPASEIPPIEIGQFLTGFITSFMIGCASLWAVIQMMTQDKWVYFAWYCLFIGIATTLYFQM.

The next 7 helical transmembrane spans lie at 42 to 62, 76 to 96, 103 to 123, 136 to 156, 172 to 192, 209 to 229, and 237 to 257; these read YVLF…YMFL, IFHI…LKPI, PQYL…GVYF, CLTI…RSGA, IQFS…LEIW, QFLT…WAVI, and WVYF…YFQM.

This sequence belongs to the UppP family.

The protein resides in the cell inner membrane. The catalysed reaction is di-trans,octa-cis-undecaprenyl diphosphate + H2O = di-trans,octa-cis-undecaprenyl phosphate + phosphate + H(+). In terms of biological role, catalyzes the dephosphorylation of undecaprenyl diphosphate (UPP). Confers resistance to bacitracin. The protein is Undecaprenyl-diphosphatase of Protochlamydia amoebophila (strain UWE25).